A 239-amino-acid polypeptide reads, in one-letter code: Small ribosomal subunit protein uS3c (239 aa).

The 97-residue stretch at Ile43–Lys139 folds into the KH type-2 domain. The tract at residues Asn50–Met74 is disordered.

It belongs to the universal ribosomal protein uS3 family. Part of the 30S ribosomal subunit.

Its subcellular location is the plastid. The protein localises to the chloroplast. The polypeptide is Small ribosomal subunit protein uS3c (rps3) (Triticum aestivum (Wheat)).